We begin with the raw amino-acid sequence, 878 residues long: Aconitate hydratase A (878 aa).

C426, C492, and C495 together coordinate [4Fe-4S] cluster.

Belongs to the aconitase/IPM isomerase family. As to quaternary structure, monomer. The cofactor is [4Fe-4S] cluster.

The enzyme catalyses citrate = D-threo-isocitrate. It carries out the reaction (2S,3R)-3-hydroxybutane-1,2,3-tricarboxylate = 2-methyl-cis-aconitate + H2O. It participates in carbohydrate metabolism; tricarboxylic acid cycle; isocitrate from oxaloacetate: step 2/2. The protein operates within organic acid metabolism; propanoate degradation. Functionally, involved in the catabolism of short chain fatty acids (SCFA) via the tricarboxylic acid (TCA)(acetyl degradation route) and probably the 2-methylcitrate cycle I (propionate degradation route). Catalyzes the reversible isomerization of citrate to isocitrate via cis-aconitate. Could catalyze the hydration of 2-methyl-cis-aconitate to yield (2R,3S)-2-methylisocitrate. The apo form of AcnA functions as a RNA-binding regulatory protein. The chain is Aconitate hydratase A (acnA) from Rickettsia felis (strain ATCC VR-1525 / URRWXCal2) (Rickettsia azadi).